The sequence spans 298 residues: Rhodopsin (298 aa).

Residues 1–15 lie on the Extracellular side of the membrane; it reads IHLHWYEYPPMNPMM. A helical membrane pass occupies residues 16-40; sequence YPLLLIFMLFTGILCLAGNFVTIWV. At 41–52 the chain is on the cytoplasmic side; the sequence is FMNTKSLRTPAN. Residues 53–75 traverse the membrane as a helical segment; the sequence is LLVVNLAMSDFLMMFTMFPPMMV. Residues 76-89 are Extracellular-facing; the sequence is TCYYHTWTLGPTFC. A disulfide bridge links C89 with C166. Residues 90-112 traverse the membrane as a helical segment; it reads QVYAFLGNLCGCASIWTMVFITF. The 'Ionic lock' involved in activated form stabilization motif lies at 113 to 115; it reads DRY. Residues 113-131 lie on the Cytoplasmic side of the membrane; the sequence is DRYNVIVKGVAGEPLSTKK. Residues 132-152 traverse the membrane as a helical segment; sequence ASLWILTIWVLSTTWCMAPFF. Over 153–179 the chain is Extracellular; it reads GWNHYVPEGNLTGCGTDYLSEDILSRS. N-linked (GlcNAc...) asparagine glycosylation is present at N162. A helical membrane pass occupies residues 180–201; it reads YLYVYSTWVYFLPLAITIYCYV. At 202–242 the chain is on the cytoplasmic side; it reads FIIKAVAAHEKGMRDQAKKMGIKSLRNEEAQKTSAECRLAK. A helical transmembrane segment spans residues 243-264; sequence IAMTTVALWFIAWTPYLLINWV. Residues 265–275 lie on the Extracellular side of the membrane; it reads GMFARSYLSPV. Residues 276–297 form a helical membrane-spanning segment; the sequence is YTIWGYVFAKANAVYNPIVYAI. Position 285 is an N6-(retinylidene)lysine (K285).

This sequence belongs to the G-protein coupled receptor 1 family. Opsin subfamily. In terms of assembly, homodimer. Interacts with GNAQ. Contains one covalently linked retinal chromophore.

It is found in the cell projection. It localises to the rhabdomere membrane. Functionally, photoreceptor required for image-forming vision at low light intensity. Can use both retinal and 3-dehydroretinal as visual pigment. Light-induced isomerization of 11-cis to all-trans retinal triggers a conformational change that activates signaling via G-proteins. Signaling via GNAQ probably mediates the activation of phospholipase C. The sequence is that of Rhodopsin (RHO) from Procambarus orcinus (Crayfish).